The primary structure comprises 175 residues: Co-chaperone protein HscB homolog (175 aa).

The J domain occupies 7–79; sequence SHFDLFHLPA…LKRATYLLHL (73 aa).

The protein belongs to the HscB family. In terms of assembly, interacts with HscA and stimulates its ATPase activity.

Co-chaperone involved in the maturation of iron-sulfur cluster-containing proteins. Seems to help targeting proteins to be folded toward HscA. The polypeptide is Co-chaperone protein HscB homolog (Burkholderia mallei (strain ATCC 23344)).